The chain runs to 2019 residues: Sodium channel protein type 5 subunit alpha (2019 aa).

Over 1–129 (MANFLLPRGT…VRRAAVKILV (129 aa)) the chain is Cytoplasmic. Residues 27–66 (RMAEKQARGSATSQESREGLPEEEAPRPQLDLQASKKLPD) are disordered. The residue at position 36 (S36) is a Phosphoserine. T38 carries the phosphothreonine modification. Over residues 41 to 52 (ESREGLPEEEAP) the composition is skewed to basic and acidic residues. One copy of the I repeat lies at 113 to 420 (VLSPFHPVRR…VVAMAYEEQN (308 aa)). The chain crosses the membrane as a helical span at residues 130 to 149 (HSLFSMLIMCTILTNCVFMA). Residues 150–157 (QHDPPPWT) are Extracellular-facing. A helical membrane pass occupies residues 158–179 (KYVEYTFTAIYTFESLVKILAR). Topologically, residues 180-188 (GFCLHAFTF) are cytoplasmic. Residues 189-209 (LRDPWNWLDFSVIVMAYTTEF) traverse the membrane as a helical segment. Residues 210–216 (VDLGNVS) are Extracellular-facing. N-linked (GlcNAc...) asparagine glycosylation is present at N214. The chain crosses the membrane as a helical span at residues 217–236 (ALRTFRVLRALKTISVISGL). The Cytoplasmic portion of the chain corresponds to 237–249 (KTIVGALIQSVKK). Residues 250 to 272 (LADVMVLTVFCLSVFALIGLQLF) form a helical membrane-spanning segment. The Extracellular portion of the chain corresponds to 273 to 357 (MGNLRHKCVR…PDHGYTSFDS (85 aa)). Residues C280 and C335 are joined by a disulfide bond. N-linked (GlcNAc...) asparagine glycosylation is found at N283, N288, N291, N318, and N328. Residues 358–378 (FAWAFLALFRLMTQDCWERLY) constitute an intramembrane region (pore-forming). Residues 379-386 (QQTLRSAG) are Extracellular-facing. The helical transmembrane segment at 387 to 413 (KIYMIFFMLVIFLGSFYLVNLILAVVA) threads the bilayer. The Cytoplasmic segment spans residues 414–719 (MAYEEQNQAT…VKFVVMDPFA (306 aa)). Phosphoserine is present on residues S457, S460, S483, and S484. Disordered regions lie at residues 461-575 (LEMS…TQGQ) and 610-647 (EATSPGSHLLRPIVLDRPPDTTTPSEEPGGPQMLTPQA). T486 is subject to Phosphothreonine. Residues 491 to 503 (DDRLPKSDSEDGP) show a composition bias toward basic and acidic residues. A phosphoserine mark is found at S497 and S510. Polar residues predominate over residues 507 to 528 (NQLSLTHGLSRTSMRPRSSRGS). R526 is modified (dimethylated arginine; alternate). Omega-N-methylarginine; alternate is present on R526. S539 and S571 each carry phosphoserine. A phosphoserine mark is found at S664 and S667. An II repeat occupies 699 to 971 (CCPLWMSIKQ…QLALARIQRG (273 aa)). The helical transmembrane segment at 720–737 (DLTITMCIVLNTLFMALE) threads the bilayer. Residues 738 to 746 (HYNMTAEFE) lie on the Extracellular side of the membrane. The N-linked (GlcNAc...) asparagine glycan is linked to N740. The helical transmembrane segment at 747 to 769 (EMLQVGNLVFTGIFTAEMTFKII) threads the bilayer. Over 770-775 (ALDPYY) the chain is Cytoplasmic. A helical membrane pass occupies residues 776 to 796 (YFQQGWNIFDSIIVILSLMEL). Topologically, residues 797–806 (GLSRMGNLSV) are extracellular. The N-linked (GlcNAc...) asparagine glycan is linked to N803. Residues 807-821 (LRSFRLLRVFKLAKS) traverse the membrane as a helical segment. Residues 822–838 (WPTLNTLIKIIGNSVGA) lie on the Cytoplasmic side of the membrane. Residues 839 to 860 (LGNLTLVLAIIVFIFAVVGMQL) traverse the membrane as a helical segment. The Extracellular segment spans residues 861-886 (FGKNYSELRHRISDSGLLPRWHMMDF). N-linked (GlcNAc...) asparagine glycosylation is present at N864. Residues 887 to 905 (FHAFLIIFRILCGEWIETM) constitute an intramembrane region (pore-forming). Over 906–914 (WDCMEVSGQ) the chain is Extracellular. A disulfide bond links C908 and C917. Residues 915 to 943 (SLCLLVFLLVMVIGNLVVLNLFLALLLSS) form a helical membrane-spanning segment. Residues 944-1205 (FSADNLTAPD…LRKTCYRIVE (262 aa)) lie on the Cytoplasmic side of the membrane. The disordered stretch occupies residues 1000–1144 (HSQLPSCIAA…EDSYSEGSTA (145 aa)). The span at 1017–1036 (EVEKAPPARKETRFEEDKRP) shows a compositional bias: basic and acidic residues. The span at 1056–1075 (SDTDDQEEDEENSLGTEEEE) shows a compositional bias: acidic residues. Residues 1098–1115 (SQVSETTSSEAEASTSQA) show a composition bias toward low complexity. The III repeat unit spans residues 1189–1503 (PGKVWWRLRK…KKYYNAMKKL (315 aa)). Residues 1206–1227 (HSWFETFIIFMILLSSGALAFE) form a helical membrane-spanning segment. Residues 1228-1238 (DIYLEERKTIK) lie on the Extracellular side of the membrane. Residues 1239–1261 (VLLEYADKMFTYVFVLEMLLKWV) form a helical membrane-spanning segment. Over 1262–1270 (AYGFKKYFT) the chain is Cytoplasmic. Residues 1271-1293 (NAWCWLDFLIVDVSLVSLVANTL) form a helical membrane-spanning segment. Over 1294–1299 (GFAEMG) the chain is Extracellular. A helical membrane pass occupies residues 1300 to 1319 (PIKSLRTLRALRPLRALSRF). Over 1320–1332 (EGMRVVVNALVGA) the chain is Cytoplasmic. The helical transmembrane segment at 1333–1357 (IPSIMNVLLVCLIFWLIFSIMGVNL) threads the bilayer. At 1358 to 1402 (FAGKFGRCINQTEGDLPLNYTIVNNKSECESFNVTGELYWTKVKV) the chain is on the extracellular side. 4 N-linked (GlcNAc...) asparagine glycosylation sites follow: N1367, N1376, N1382, and N1390. An intramembrane region (pore-forming) is located at residues 1403–1424 (NFDNVGAGYLALLQVATFKGWM). Over 1425–1447 (DIMYAAVDSRGYEEQPQWEDNLY) the chain is Extracellular. The chain crosses the membrane as a helical span at residues 1448-1472 (MYIYFVVFIIFGSFFTLNLFIGVII). Topologically, residues 1473 to 1530 (DNFNQQKKKLGGQDIFMTEEQKKYYNAMKKLGSKKPQKPIPRPLNKYQGFIFDIVTKQ) are cytoplasmic. S1505 carries the phosphoserine; by PKC modification. One copy of the IV repeat lies at 1512–1809 (IPRPLNKYQG…WEKFDPEATQ (298 aa)). A helical transmembrane segment spans residues 1531–1549 (AFDVTIMFLICLNMVTMMV). Over 1550 to 1560 (ETDDQSPEKVN) the chain is Extracellular. A helical membrane pass occupies residues 1561 to 1582 (ILAKINLLFVAIFTGECIVKMA). Residues 1583–1591 (ALRHYYFTN) lie on the Cytoplasmic side of the membrane. The helical transmembrane segment at 1592–1614 (SWNIFDFVVVILSIVGTVLSDII) threads the bilayer. Topologically, residues 1615 to 1621 (QKYFFSP) are extracellular. Residues 1622–1642 (TLFRVIRLARIGRILRLIRGA) traverse the membrane as a helical segment. Residues 1643–1652 (KGIRTLLFAL) lie on the Cytoplasmic side of the membrane. A helical transmembrane segment spans residues 1653-1681 (MMSLPALFNIGLLLFLVMFIYSIFGMANF). At 1682-1699 (AYVKWEAGIDDMFNFQTF) the chain is on the extracellular side. Positions 1700–1716 (ANSMLCLFQITTSAGWD) form an intramembrane region, pore-forming. Topologically, residues 1717 to 1747 (GLLSPILNTGPPYCDPNLPNSNGSRGNCGSP) are extracellular. The helical transmembrane segment at 1748–1773 (AVGILFFTTYIIISFLIVVNMYIAII) threads the bilayer. At 1774-2019 (LENFSVATEE…SPDRDRESIV (246 aa)) the chain is on the cytoplasmic side. The segment at 1841-1903 (DLPMVSGDRI…ITTTLRRKHE (63 aa)) is interaction with FGF13. One can recognise an IQ domain in the interval 1903 to 1932 (EEVSATVIQRAFRRHLLQRSVKHASFLFRQ). Residues 1963–1982 (SGPLSSSSISSTSFPPSYDS) are compositionally biased toward low complexity. The interval 1963 to 2019 (SGPLSSSSISSTSFPPSYDSVTRATSDNLPVRASDYSRSEDLADFPPSPDRDRESIV) is disordered. The segment at 1977–1980 (PPSY) is interaction with NEDD4, NEDD4L and WWP2.

This sequence belongs to the sodium channel (TC 1.A.1.10) family. Nav1.5/SCN5A subfamily. Cannot form the same regulatory interactions with beta subunits as other Navs do. Interacts with the PDZ domain of the syntrophin SNTA1, SNTB1 and SNTB2. Interacts with NEDD4, NEDD4L, WWP2 and GPD1L. Interacts with CALM. Interacts with FGF13; the interaction is direct and may regulate SNC5A density at membranes and function. Interacts with FGF12 and FGF14. Interacts with ANK3. Interacts with PKP2 (via N-terminus). Interacts with TMEM233. Interacts with XIRP2; the interaction is required for normal action potential configuration in the heart. In terms of processing, phosphorylation at Ser-1505 by PKC in a highly conserved cytoplasmic loop slows inactivation of the sodium channel and reduces peak sodium currents. Regulated through phosphorylation by CaMK2D. Post-translationally, ubiquitinated by NEDD4L; which promotes its endocytosis. Does not seem to be ubiquitinated by NEDD4 or WWP2. Lacks the cysteine which covalently binds the conotoxin GVIIJ. This cysteine (position 868) is speculated in other sodium channel subunits alpha to be implied in covalent binding with the sodium channel subunit beta-2 or beta-4. In terms of processing, N-glycosylated at Asn-318, probably hinders potential interaction with regulatory subunits. In terms of tissue distribution, expressed in the myocardium (at protein level).

It is found in the cell membrane. The protein resides in the cytoplasm. The protein localises to the perinuclear region. It localises to the sarcolemma. Its subcellular location is the T-tubule. It is found in the cell junction. It carries out the reaction Na(+)(in) = Na(+)(out). Its activity is regulated as follows. Channel inactivation is regulated by intracellular calcium levels. It is a tetrodotoxin-resistant voltage-gated Na(+) channel (Nav). Pore-forming subunit of Nav1.5, a voltage-gated sodium (Nav) channel that directly mediates the depolarizing phase of action potentials in excitable membranes. Navs, also called VGSCs (voltage-gated sodium channels) or VDSCs (voltage-dependent sodium channels), operate by switching between closed and open conformations depending on the voltage difference across the membrane. In the open conformation they allow Na(+) ions to selectively pass through the pore, along their electrochemical gradient. The influx of Na(+) ions provokes membrane depolarization, initiating the propagation of electrical signals throughout cells and tissues. Nav1.5 is the predominant sodium channel expressed in myocardial cells and it is responsible for the initial upstroke of the action potential in cardiac myocytes, thereby initiating the heartbeat. Required for normal electrical conduction including formation of the infranodal ventricular conduction system and normal action potential configuration, as a result of its interaction with XIRP2. This is Sodium channel protein type 5 subunit alpha from Mus musculus (Mouse).